Consider the following 47-residue polypeptide: MCGIFSKEVLSKHVDVEYRFSAEPYIGASCSNVSVLSMLCLRAKKTI.

This sequence belongs to the YobF/DUF2527 family.

The chain is Protein YobF (yobF) from Escherichia coli O157:H7.